Here is a 375-residue protein sequence, read N- to C-terminus: FK506-binding protein 4 (375 aa).

Disordered regions lie at residues 55–78 (GFED…EEEI) and 127–265 (PPDF…SKMT). 2 stretches are compositionally biased toward acidic residues: residues 56–66 (FEDDYDEEEQE) and 131–173 (FDQD…DPDR). The segment covering 196-216 (DSKKRAAEKPVKETAAKKLKA) has biased composition (basic and acidic residues). The span at 217 to 230 (DASAASAASTPTKA) shows a compositional bias: low complexity. Residues 231–261 (IETKGEKQTKGAKDTKPKSETVEKKTVDKST) show a composition bias toward basic and acidic residues. Positions 289-375 (GQKVGMRYVG…VFDVKLVEIK (87 aa)) constitute a PPIase FKBP-type domain.

This sequence belongs to the FKBP-type PPIase family. FKBP3/4 subfamily. Binds to histones H3 and H4.

It is found in the nucleus. It catalyses the reaction [protein]-peptidylproline (omega=180) = [protein]-peptidylproline (omega=0). With respect to regulation, inhibited by both FK506 and rapamycin. Functionally, PPIase that acts as a histone chaperone. Histone proline isomerase that increases the rate of cis-trans isomerization at prolines on the histone H3 N-terminal tail. Proline isomerization influences H3 methylation thereby regulating gene expression. This chain is FK506-binding protein 4 (FPR4), found in Mycosarcoma maydis (Corn smut fungus).